The sequence spans 494 residues: GPI alpha-1,6-mannosyltransferase 2 (494 aa).

Residues 1–13 are Cytoplasmic-facing; it reads MWSLDPSQKEVLR. A helical membrane pass occupies residues 14 to 34; it reads FAVSCRILTLMLQALFNIIIP. At 35–77 the chain is on the lumenal side; the sequence is DHHADAFSPPRLASSCSVDQLVEGLLGGLSRWDAEHFLFIAEH. Residues 78 to 98 traverse the membrane as a helical segment; the sequence is GYLYEHNFAFFPGFPLALLMG. Topologically, residues 99–113 are cytoplasmic; sequence TELLRPLQGLLSQRS. A helical membrane pass occupies residues 114 to 134; it reads CLLVSVALLNFLFSVLAAVTL. At 135–136 the chain is on the lumenal side; that stretch reads HD. A helical transmembrane segment spans residues 137 to 157; that stretch reads LGCLVLGCPRQAFYAAMLFCL. Residues 158–161 lie on the Cytoplasmic side of the membrane; sequence SPAN. A helical transmembrane segment spans residues 162–182; sequence VFLAAGYSEALFAFLTFSAMG. Topologically, residues 183–192 are lumenal; it reads QLERGRSWAS. The helical transmembrane segment at 193–213 threads the bilayer; it reads GLLFALATGVRSNGLVSVGFL. Topologically, residues 214 to 234 are cytoplasmic; that stretch reads LHAQCRGFFSSLVVLNPLKPL. A helical membrane pass occupies residues 235 to 255; that stretch reads FKLMASLCLSVLTVSLPFALF. The Lumenal segment spans residues 256–327; that stretch reads QYYAYTQFCL…RYYELRQVPN (72 aa). Residues 328–348 traverse the membrane as a helical segment; that stretch reads FLLATPVAVLVVWAAWTYVTT. Residues 349–379 lie on the Cytoplasmic side of the membrane; sequence HPWLCLTLGLRRSKDSKKTLEKPHPGFLSPK. Residues 380-400 traverse the membrane as a helical segment; sequence VFVYLVHAAGLLLFGSLCMHV. Residues 401–470 lie on the Lumenal side of the membrane; sequence QVLTRLLCSS…NWRACSPVTR (70 aa). Residues 471–491 traverse the membrane as a helical segment; that stretch reads CILGYFLTYWLLGLLLHCNFL. At 492 to 494 the chain is on the cytoplasmic side; it reads PWT.

This sequence belongs to the PIGV family. Post-translationally, not N-glycosylated.

The protein resides in the endoplasmic reticulum membrane. It functions in the pathway glycolipid biosynthesis; glycosylphosphatidylinositol-anchor biosynthesis. Alpha-1,6-mannosyltransferase that catalyzes the transfer of the second mannose, via an alpha-1,6 bond, from a dolichol-phosphate-mannose (Dol-P-Man) to the alpha-D-Man-(1-&gt;4)-alpha-D-GlcN-(1-&gt;6)-(1-radyl,2-acyl-sn-glycero-3-phospho)-2-acyl-inositol intermediate to generate an alpha-D-Man-(1-&gt;6)-alpha-D-Man-(1-&gt;4)-alpha-D-GlcN-(1-&gt;6)-(1-radyl,2-acyl-sn-glycero-3-phospho)-2-acyl-inositol and participates in the seventh step of the glycosylphosphatidylinositol-anchor biosynthesis. Also transfers the second mannose on a 2-PEtn-alpha-D-Man-(1-&gt;4)-alpha-D-GlcN-(1-&gt;6)-(1-radyl,2-acyl-sn-glycero-3-phospho)-2-acyl-inositol. The polypeptide is GPI alpha-1,6-mannosyltransferase 2 (Cricetulus griseus (Chinese hamster)).